Reading from the N-terminus, the 506-residue chain is Lysine--tRNA ligase (506 aa).

Mg(2+) is bound by residues glutamate 416 and glutamate 423.

It belongs to the class-II aminoacyl-tRNA synthetase family. In terms of assembly, homodimer. The cofactor is Mg(2+).

The protein resides in the cytoplasm. It carries out the reaction tRNA(Lys) + L-lysine + ATP = L-lysyl-tRNA(Lys) + AMP + diphosphate. This is Lysine--tRNA ligase from Baumannia cicadellinicola subsp. Homalodisca coagulata.